The following is a 542-amino-acid chain: CTP synthase (542 aa).

The segment at methionine 1–leucine 265 is amidoligase domain. Serine 13 is a CTP binding site. Serine 13 is a binding site for UTP. ATP-binding positions include serine 14–leucine 19 and aspartate 71. The Mg(2+) site is built by aspartate 71 and glutamate 139. Residues aspartate 146–glutamate 148, lysine 186–glutamine 191, and lysine 222 each bind CTP. Residues lysine 186–glutamine 191 and lysine 222 each bind UTP. The Glutamine amidotransferase type-1 domain maps to threonine 291 to leucine 541. Glycine 353 is an L-glutamine binding site. The active-site Nucleophile; for glutamine hydrolysis is the cysteine 380. L-glutamine contacts are provided by residues phenylalanine 381–glutamine 384, glutamate 404, and arginine 469. Catalysis depends on residues histidine 514 and glutamate 516.

This sequence belongs to the CTP synthase family. In terms of assembly, homotetramer.

It catalyses the reaction UTP + L-glutamine + ATP + H2O = CTP + L-glutamate + ADP + phosphate + 2 H(+). The catalysed reaction is L-glutamine + H2O = L-glutamate + NH4(+). The enzyme catalyses UTP + NH4(+) + ATP = CTP + ADP + phosphate + 2 H(+). It participates in pyrimidine metabolism; CTP biosynthesis via de novo pathway; CTP from UDP: step 2/2. With respect to regulation, allosterically activated by GTP, when glutamine is the substrate; GTP has no effect on the reaction when ammonia is the substrate. The allosteric effector GTP functions by stabilizing the protein conformation that binds the tetrahedral intermediate(s) formed during glutamine hydrolysis. Inhibited by the product CTP, via allosteric rather than competitive inhibition. Its function is as follows. Catalyzes the ATP-dependent amination of UTP to CTP with either L-glutamine or ammonia as the source of nitrogen. Regulates intracellular CTP levels through interactions with the four ribonucleotide triphosphates. The polypeptide is CTP synthase (Rhodospirillum rubrum (strain ATCC 11170 / ATH 1.1.1 / DSM 467 / LMG 4362 / NCIMB 8255 / S1)).